We begin with the raw amino-acid sequence, 220 residues long: Cell division protein SepF (220 aa).

Positions 33–82 (GAARGYARRPREDRFEEEGYIDRAGREYDDRPAPREYDEPPIYRGGYDEP) are disordered. A compositionally biased stretch (basic and acidic residues) spans 52-70 (YIDRAGREYDDRPAPREYD).

This sequence belongs to the SepF family. As to quaternary structure, homodimer. Interacts with FtsZ.

The protein resides in the cytoplasm. Cell division protein that is part of the divisome complex and is recruited early to the Z-ring. Probably stimulates Z-ring formation, perhaps through the cross-linking of FtsZ protofilaments. Its function overlaps with FtsA. This is Cell division protein SepF from Mycobacterium sp. (strain JLS).